The primary structure comprises 271 residues: NADPH-dependent 7-cyano-7-deazaguanine reductase (271 aa).

79–81 (IES) provides a ligand contact to substrate. 81 to 82 (SK) contributes to the NADPH binding site. Cysteine 178 serves as the catalytic Thioimide intermediate. Catalysis depends on aspartate 185, which acts as the Proton donor. 217–218 (HE) lines the substrate pocket. An NADPH-binding site is contributed by 246-247 (RG).

This sequence belongs to the GTP cyclohydrolase I family. QueF type 2 subfamily. Homodimer.

It localises to the cytoplasm. The enzyme catalyses 7-aminomethyl-7-carbaguanine + 2 NADP(+) = 7-cyano-7-deazaguanine + 2 NADPH + 3 H(+). The protein operates within tRNA modification; tRNA-queuosine biosynthesis. Catalyzes the NADPH-dependent reduction of 7-cyano-7-deazaguanine (preQ0) to 7-aminomethyl-7-deazaguanine (preQ1). This is NADPH-dependent 7-cyano-7-deazaguanine reductase from Acinetobacter baylyi (strain ATCC 33305 / BD413 / ADP1).